The following is a 298-amino-acid chain: Flavin-dependent thymidylate synthase (298 aa).

Residues 41 to 251 (GFVRLVDYMG…PLTYAAFVEY (211 aa)) form the ThyX domain. Residues Thr-87, 110–112 (RHR), and Glu-118 each bind FAD. DUMP is bound by residues 107-110 (QWVR), 118-122 (EYSAR), and Arg-190. The ThyX motif motif lies at 110 to 120 (RHRTANVNEYS). FAD-binding positions include 206–208 (DLH) and His-212. Arg-217 contacts dUMP. Arg-217 functions as the Involved in ionization of N3 of dUMP, leading to its activation in the catalytic mechanism.

Belongs to the thymidylate synthase ThyX family. As to quaternary structure, homotetramer. It depends on FAD as a cofactor.

It catalyses the reaction dUMP + (6R)-5,10-methylene-5,6,7,8-tetrahydrofolate + NADPH + H(+) = dTMP + (6S)-5,6,7,8-tetrahydrofolate + NADP(+). It functions in the pathway pyrimidine metabolism; dTTP biosynthesis. Functionally, catalyzes the reductive methylation of 2'-deoxyuridine-5'-monophosphate (dUMP) to 2'-deoxythymidine-5'-monophosphate (dTMP) while utilizing 5,10-methylenetetrahydrofolate (mTHF) as the methyl donor, and NADPH and FADH(2) as the reductant. This Ehrlichia ruminantium (strain Welgevonden) protein is Flavin-dependent thymidylate synthase.